A 396-amino-acid polypeptide reads, in one-letter code: Elongation factor Tu 1 (396 aa).

A tr-type G domain is found at 10-206 (KPHVNVGTIG…TLDTYIPEPE (197 aa)). Positions 19-26 (GHVDHGKT) are G1. 19–26 (GHVDHGKT) contributes to the GTP binding site. Threonine 26 serves as a coordination point for Mg(2+). Residues 60 to 64 (GITIN) form a G2 region. Residues 81 to 84 (DCPG) form a G3 region. Residues 81 to 85 (DCPGH) and 136 to 139 (NKCD) each bind GTP. A G4 region spans residues 136–139 (NKCD). The G5 stretch occupies residues 174 to 176 (SAL).

Belongs to the TRAFAC class translation factor GTPase superfamily. Classic translation factor GTPase family. EF-Tu/EF-1A subfamily. In terms of assembly, monomer.

It localises to the cytoplasm. The enzyme catalyses GTP + H2O = GDP + phosphate + H(+). In terms of biological role, GTP hydrolase that promotes the GTP-dependent binding of aminoacyl-tRNA to the A-site of ribosomes during protein biosynthesis. The polypeptide is Elongation factor Tu 1 (Psychrobacter sp. (strain PRwf-1)).